The sequence spans 251 residues: Triosephosphate isomerase, glycosomal (251 aa).

Residues Asn12 and Lys14 each contribute to the substrate site. Residue His96 is the Electrophile of the active site. The Proton acceptor role is filled by Glu168.

The protein belongs to the triosephosphate isomerase family. In terms of assembly, homodimer.

It is found in the glycosome. It carries out the reaction D-glyceraldehyde 3-phosphate = dihydroxyacetone phosphate. Its pathway is carbohydrate biosynthesis; gluconeogenesis. It functions in the pathway carbohydrate degradation; glycolysis; D-glyceraldehyde 3-phosphate from glycerone phosphate: step 1/1. The polypeptide is Triosephosphate isomerase, glycosomal (Trypanosoma cruzi).